We begin with the raw amino-acid sequence, 120 residues long: Large ribosomal subunit protein bL20 (120 aa).

It belongs to the bacterial ribosomal protein bL20 family.

Binds directly to 23S ribosomal RNA and is necessary for the in vitro assembly process of the 50S ribosomal subunit. It is not involved in the protein synthesizing functions of that subunit. In Cereibacter sphaeroides (strain ATCC 17029 / ATH 2.4.9) (Rhodobacter sphaeroides), this protein is Large ribosomal subunit protein bL20.